A 103-amino-acid polypeptide reads, in one-letter code: Small ubiquitin-related modifier 2 (103 aa).

The region spanning 15–92 is the Ubiquitin-like domain; sequence AHINLKVKGQ…IDAMLHQTGG (78 aa). Gly92 participates in a covalent cross-link: Glycyl lysine isopeptide (Gly-Lys) (interchain with K-? in acceptor proteins).

The protein belongs to the ubiquitin family. SUMO subfamily. Interacts with SAE2, SCE1, SIZ1 and MMS21. Interacts with HSFA2. Covalently attached to ABI5, FLD, GTE3, HSFA2 and ICE1.

It localises to the nucleus. Its subcellular location is the cytoplasm. In terms of biological role, ubiquitin-like protein which can be covalently attached to target lysines as a monomer. Does not seem to be involved in protein degradation and may function as an antagonist of ubiquitin in the degradation process. Required for the massive protein sumoylation in the nucleus induced by heat shock and controlled by SIZ1. This Arabidopsis thaliana (Mouse-ear cress) protein is Small ubiquitin-related modifier 2.